We begin with the raw amino-acid sequence, 495 residues long: Glutamate--tRNA ligase (495 aa).

A 'HIGH' region motif is present at residues 14 to 24 (PSPTGYLHIGS). Residues 255–259 (KLSKR) carry the 'KMSKS' region motif. Lysine 258 contributes to the ATP binding site.

This sequence belongs to the class-I aminoacyl-tRNA synthetase family. Glutamate--tRNA ligase type 1 subfamily. As to quaternary structure, monomer.

It is found in the cytoplasm. It catalyses the reaction tRNA(Glu) + L-glutamate + ATP = L-glutamyl-tRNA(Glu) + AMP + diphosphate. Its function is as follows. Catalyzes the attachment of glutamate to tRNA(Glu) in a two-step reaction: glutamate is first activated by ATP to form Glu-AMP and then transferred to the acceptor end of tRNA(Glu). The sequence is that of Glutamate--tRNA ligase from Herpetosiphon aurantiacus (strain ATCC 23779 / DSM 785 / 114-95).